Consider the following 185-residue polypeptide: Ribosome-recycling factor (185 aa).

Belongs to the RRF family.

The protein resides in the cytoplasm. In terms of biological role, responsible for the release of ribosomes from messenger RNA at the termination of protein biosynthesis. May increase the efficiency of translation by recycling ribosomes from one round of translation to another. In Thermobifida fusca (strain YX), this protein is Ribosome-recycling factor.